The sequence spans 289 residues: 4-diphosphocytidyl-2-C-methyl-D-erythritol kinase (289 aa).

The active site involves lysine 10. 94-104 (PVAAGLAGGSS) contributes to the ATP binding site. Aspartate 136 is an active-site residue.

This sequence belongs to the GHMP kinase family. IspE subfamily.

It catalyses the reaction 4-CDP-2-C-methyl-D-erythritol + ATP = 4-CDP-2-C-methyl-D-erythritol 2-phosphate + ADP + H(+). It functions in the pathway isoprenoid biosynthesis; isopentenyl diphosphate biosynthesis via DXP pathway; isopentenyl diphosphate from 1-deoxy-D-xylulose 5-phosphate: step 3/6. Functionally, catalyzes the phosphorylation of the position 2 hydroxy group of 4-diphosphocytidyl-2C-methyl-D-erythritol. The chain is 4-diphosphocytidyl-2-C-methyl-D-erythritol kinase from Bacillus licheniformis (strain ATCC 14580 / DSM 13 / JCM 2505 / CCUG 7422 / NBRC 12200 / NCIMB 9375 / NCTC 10341 / NRRL NRS-1264 / Gibson 46).